The sequence spans 1475 residues: Peroxidasin homolog (1475 aa).

Positions 1–23 (MAVRPTRRCLLALLLCFAWWAMA) are cleaved as a signal peptide. Residues 24–60 (VVASKQGAGCPSRCLCFRTTVRCMHLLLEAVPAVAPQ) form the LRRNT domain. Cystine bridges form between Cys-33–Cys-39 and Cys-37–Cys-46. LRR repeat units follow at residues 58–81 (APQT…AFRR), 82–105 (LRSL…AFED), 107–129 (ENLK…AFKG), 130–153 (LASL…SFQH), 154–177 (LPKL…TFSQ), and 179–201 (ESMK…LWLA). An LRRCT domain is found at 189–241 (NALHCDCEILWLADLLKTYAQSGNAQAAATCEYPRRIQGRSVATITPEELNCE). Intrachain disulfides connect Cys-193–Cys-240, Cys-195–Cys-219, Cys-264–Cys-314, Cys-360–Cys-409, Cys-451–Cys-499, and Cys-543–Cys-591. 4 Ig-like C2-type domains span residues 243-329 (PRIT…QEVT), 339-425 (PTFV…AFII), 430-517 (PQFT…LTVQ), and 518-607 (PRVT…MVLS). Residue Asn-387 is glycosylated (N-linked (GlcNAc...) asparagine). The LRR 7 repeat unit spans residues 402–425 (SDSGEYTCFASNSVDSIHATAFII). Asn-637, Asn-696, Asn-716, and Asn-728 each carry an N-linked (GlcNAc...) asparagine glycan. 4 cysteine pairs are disulfide-bonded: Cys-720/Cys-882, Cys-729/Cys-745, Cys-844/Cys-854, and Cys-848/Cys-872. Heme b is bound at residue Asp-823. Catalysis depends on His-824, which acts as the Proton acceptor. Asp-825 provides a ligand contact to Ca(2+). 4 residues coordinate Ca(2+): Thr-904, Tyr-906, Asp-908, and Ser-910. A disulfide bridge links Cys-956 with Cys-967. Asn-961 carries an N-linked (GlcNAc...) asparagine glycan. 2 residues coordinate heme b: Glu-977 and His-1071. One copy of the LRR 8 repeat lies at 1148 to 1172 (ALDLAAINIQRGRDHGIPPYHDYRV). Tyr-1173 is subject to Phosphotyrosine. 2 cysteine pairs are disulfide-bonded: Cys-1174-Cys-1231 and Cys-1272-Cys-1298. N-linked (GlcNAc...) asparagine glycosylation is present at Asn-1175. Ser-1177 carries the phosphoserine modification. Residues 1267–1288 (LARILCDNSDNITRVQQDVFRV) form an LRR 9 repeat. 2 N-linked (GlcNAc...) asparagine glycosylation sites follow: Asn-1277 and Asn-1364. A required in homotrimerization region spans residues 1312 to 1407 (CCEDCRTRGQ…QINSLESRLS (96 aa)). The VWFC domain maps to 1409 to 1467 (TECVDDSGESHGGNTKWKKDPCTVCECKNGQITCFVEACQPAACPQPVKVEGACCPVCL).

The protein belongs to the peroxidase family. XPO subfamily. In terms of assembly, homotrimer; disulfide-linked. The homotrimer form is predominant. Homooligomer; disulfide-linked. Oligomerization occurs intracellularly before C-terminal proteolytic cleavage. Interacts with PXDNL; this interaction inhibits the peroxidase activity of PXDN. Ca(2+) serves as cofactor. The cofactor is heme b. Post-translationally, processed by FURIN and the proteolytic processing largely depends on the peroxidase activity of PXDN. The proteolytic cleavage occurs after intracellular homotrimerization and releases into the extracellular matrix a large, catalytically active fragment and a smaller fragment consisting primarily of the C-terminal VWFC domain. The processing enhances both peroxidase activity and sulfilimine cross-links formation. As to expression, highly expressed in the cardiovascular system. In the embryo, expressed in the corneal epithelial layer. In the adult eyes, expressed in the corneal and lens epithelium. Expressed in lung.

It is found in the secreted. Its subcellular location is the extracellular space. The protein resides in the extracellular matrix. It localises to the endoplasmic reticulum. The protein localises to the cell surface. It is found in the basement membrane. The catalysed reaction is L-lysyl-[collagen] + L-methionyl-[collagen] + H2O2 = [collagen]-L-lysyl-N-S-L-methionyl-[collagen] + 2 H2O + H(+). It carries out the reaction bromide + H2O2 = hypobromite + H2O. It catalyses the reaction L-lysyl-[collagen] + L-methionyl-[collagen] + hypobromite = [collagen]-L-lysyl-N-S-L-methionyl-[collagen] + bromide + H2O + H(+). The enzyme catalyses (5R)-5-hydroxy-L-lysyl-[collagen] + L-methionyl-[collagen] + hypobromite = [collagen]-(5R)-5-hydroxy-L-lysyl-N-S-L-methionyl-[collagen] + bromide + H2O + H(+). The catalysed reaction is (5R)-5-hydroxy-L-lysyl-[collagen] + L-methionyl-[collagen] + H2O2 = [collagen]-(5R)-5-hydroxy-L-lysyl-N-S-L-methionyl-[collagen] + 2 H2O + H(+). It carries out the reaction L-tyrosyl-[protein] + bromide + H2O2 + H(+) = 3-bromo-L-tyrosyl-[protein] + 2 H2O. It catalyses the reaction hypobromite + L-tyrosyl-[protein] + H(+) = 3-bromo-L-tyrosyl-[protein] + H2O. With respect to regulation, thiocyanate inhibits the formation of 3-bromotyrosine. In terms of biological role, catalyzes the two-electron oxidation of bromide by hydrogen peroxide and generates hypobromite as a reactive intermediate which mediates the formation of sulfilimine cross-links between methionine and hydroxylysine residues within an uncross-linked collagen IV/COL4A1 NC1 hexamer. In turns, directly contributes to the collagen IV network-dependent fibronectin/FN and laminin assembly, which is required for full extracellular matrix (ECM)-mediated signaling. Thus, sulfilimine cross-links are essential for growth factor-induced cell proliferation and survival in endothelial cells, an event essential to basement membrane integrity. In addition, through the bromide oxidation, may promote tubulogenesis and induce angiogenesis through ERK1/2, Akt, and FAK pathways. Moreover brominates alpha2 collagen IV chain/COL4A2 at 'Tyr-1480' and leads to bromine enrichment of the basement membranes. In vitro, can also catalyze the two-electron oxidation of thiocyanate and iodide and these two substrates could effectively compete with bromide and thus inhibit the formation of sulfilimine bonds. Binds laminins. May play a role in the organization of eyeball structure and lens development during eye development. In Mus musculus (Mouse), this protein is Peroxidasin homolog.